The following is a 382-amino-acid chain: Transforming growth factor beta-1 proprotein (382 aa).

The signal sequence occupies residues 1–20 (MRAVCLMLTALLMLEYVCRS). The interval 23–68 (MSTCKSLDLELVKRKRIEAIRGQILSKLRLPKEPEIDQEGDTEEVP) is straightjacket domain. The tract at residues 69-264 (ASLMSIYNST…SLPVERHSQL (196 aa)) is arm domain. N-linked (GlcNAc...) asparagine glycosylation is found at Asn76, Asn116, and Asn125. The interval 218 to 243 (GKPMEEFRFKISGMNKLRGNTETLAM) is bowtie tail. The Cell attachment site signature appears at 235 to 237 (RGN). Cystine bridges form between Cys278–Cys286, Cys285–Cys348, Cys314–Cys379, and Cys318–Cys381.

It belongs to the TGF-beta family. As to quaternary structure, latency-associated peptide: Homodimer; disulfide-linked. Latency-associated peptide: Interacts with Transforming growth factor beta-1 (TGF-beta-1) chain; interaction is non-covalent and maintains (TGF-beta-1) in a latent state; each Latency-associated peptide (LAP) monomer interacts with TGF-beta-1 in the other monomer. Transforming growth factor beta-1: Homodimer; disulfide-linked. Transforming growth factor beta-1: Interacts with TGF-beta receptors (tgfbr1 and tgfbr2), leading to signal transduction. Interacts with EFEMP2. Transforming growth factor beta-1 proprotein: The precursor proprotein is cleaved in the Golgi apparatus to form Transforming growth factor beta-1 (TGF-beta-1) and Latency-associated peptide (LAP) chains, which remain non-covalently linked, rendering TGF-beta-1 inactive. In terms of tissue distribution, expressed in blood leukocytes, kidney macrophages, brain, gill and spleen but not in liver.

It localises to the secreted. It is found in the extracellular space. The protein localises to the extracellular matrix. Functionally, transforming growth factor beta-1 proprotein: Precursor of the Latency-associated peptide (LAP) and Transforming growth factor beta-1 (TGF-beta-1) chains, which constitute the regulatory and active subunit of TGF-beta-1, respectively. In terms of biological role, required to maintain the Transforming growth factor beta-1 (TGF-beta-1) chain in a latent state during storage in extracellular matrix. Associates non-covalently with TGF-beta-1 and regulates its activation via interaction with 'milieu molecules', such as LTBP1, LRRC32/GARP and LRRC33/NRROS, that control activation of TGF-beta-1. Interaction with integrins (ITGAV:ITGB6 or ITGAV:ITGB8) results in distortion of the Latency-associated peptide chain and subsequent release of the active TGF-beta-1. Its function is as follows. Transforming growth factor beta-1: Multifunctional protein that regulates the growth and differentiation of various cell types and is involved in various processes, such as normal development, immune function, microglia function and responses to neurodegeneration. Activation into mature form follows different steps: following cleavage of the proprotein in the Golgi apparatus, Latency-associated peptide (LAP) and Transforming growth factor beta-1 (TGF-beta-1) chains remain non-covalently linked rendering TGF-beta-1 inactive during storage in extracellular matrix. At the same time, LAP chain interacts with 'milieu molecules', such as ltbp1, lrrc32/garp and lrrc33/nrros that control activation of TGF-beta-1 and maintain it in a latent state during storage in extracellular milieus. TGF-beta-1 is released from LAP by integrins (ITGAV:ITGB6 or ITGAV:ITGB8): integrin-binding to LAP stabilizes an alternative conformation of the LAP bowtie tail and results in distortion of the LAP chain and subsequent release of the active TGF-beta-1. Once activated following release of LAP, TGF-beta-1 acts by binding to TGF-beta receptors (tgfbr1 and tgfbr2), which transduce signal. While expressed by many cells types, TGF-beta-1 only has a very localized range of action within cell environment thanks to fine regulation of its activation by Latency-associated peptide chain (LAP) and 'milieu molecules'. Plays an important role in bone remodeling: acts as a potent stimulator of osteoblastic bone formation. Can promote either T-helper 17 cells (Th17) or regulatory T-cells (Treg) lineage differentiation in a concentration-dependent manner. Can induce epithelial-to-mesenchymal transition (EMT) and cell migration in various cell types. This Oncorhynchus mykiss (Rainbow trout) protein is Transforming growth factor beta-1 proprotein (tgfb1).